The following is an 85-amino-acid chain: UPF0297 protein Clos_1665 (85 aa).

This sequence belongs to the UPF0297 family.

This is UPF0297 protein Clos_1665 from Alkaliphilus oremlandii (strain OhILAs) (Clostridium oremlandii (strain OhILAs)).